The primary structure comprises 104 residues: Membrane magnesium transporter (104 aa).

The Cytoplasmic portion of the chain corresponds to 1–2 (MN). Residues 3–23 (LGFLVGVFGVLILSHAAYSTI) form a helical membrane-spanning segment. At 24 to 40 (QYRGLLKIMEEEFSRPP) the chain is on the lumenal side. A helical transmembrane segment spans residues 41 to 61 (INVILELIIGLALCMWAALTF). At 62–104 (PGKFLSIHPDSDENRAVFLPDNSDFMIFNHRGRLFPPQIDMKF) the chain is on the cytoplasmic side.

This sequence belongs to the membrane magnesium transporter (TC 1.A.67) family. Component of the ER membrane protein complex (EMC).

The protein localises to the endoplasmic reticulum membrane. It localises to the golgi apparatus membrane. It is found in the early endosome membrane. Its function is as follows. Mediates Mg(2+) transport. The sequence is that of Membrane magnesium transporter from Arabidopsis thaliana (Mouse-ear cress).